Here is a 408-residue protein sequence, read N- to C-terminus: Imidazolonepropionase (408 aa).

Residues His73 and His75 each coordinate Fe(3+). Positions 73 and 75 each coordinate Zn(2+). Residues Arg82, Tyr145, and His178 each contribute to the 4-imidazolone-5-propanoate site. Tyr145 is a binding site for N-formimidoyl-L-glutamate. His243 contributes to the Fe(3+) binding site. His243 provides a ligand contact to Zn(2+). Gln246 serves as a coordination point for 4-imidazolone-5-propanoate. Asp318 serves as a coordination point for Fe(3+). Residue Asp318 coordinates Zn(2+). Residues Asn320 and Gly322 each coordinate N-formimidoyl-L-glutamate. Residue Ser323 coordinates 4-imidazolone-5-propanoate.

Belongs to the metallo-dependent hydrolases superfamily. HutI family. Zn(2+) serves as cofactor. Requires Fe(3+) as cofactor.

It is found in the cytoplasm. It carries out the reaction 4-imidazolone-5-propanoate + H2O = N-formimidoyl-L-glutamate. It functions in the pathway amino-acid degradation; L-histidine degradation into L-glutamate; N-formimidoyl-L-glutamate from L-histidine: step 3/3. Catalyzes the hydrolytic cleavage of the carbon-nitrogen bond in imidazolone-5-propanoate to yield N-formimidoyl-L-glutamate. It is the third step in the universal histidine degradation pathway. This is Imidazolonepropionase from Shewanella baltica (strain OS195).